The following is a 507-amino-acid chain: Arabinose import ATP-binding protein AraG (507 aa).

2 ABC transporter domains span residues 14–249 and 249–505; these read LRFN…MVGR and RDIQ…LPRT. 46-53 lines the ATP pocket; it reads GENGAGKS.

This sequence belongs to the ABC transporter superfamily. Arabinose importer (TC 3.A.1.2.2) family. In terms of assembly, the complex is composed of two ATP-binding proteins (AraG), two transmembrane proteins (AraH) and a solute-binding protein (AraF).

The protein localises to the cell inner membrane. It carries out the reaction L-arabinose(out) + ATP + H2O = L-arabinose(in) + ADP + phosphate + H(+). Part of the ABC transporter complex AraFGH involved in arabinose import. Responsible for energy coupling to the transport system. This Pseudomonas syringae pv. tomato (strain ATCC BAA-871 / DC3000) protein is Arabinose import ATP-binding protein AraG.